We begin with the raw amino-acid sequence, 101 residues long: MNKSKRLFPKSKRSFRRRLPPIQSGDRIDYRNMSLISRFISEQGKILSRRVNRVTLKQQRLITSAIKQARILSLLPFINNQKQFERSESTPRTTSLRTRKK.

It belongs to the bacterial ribosomal protein bS18 family. In terms of assembly, part of the 30S ribosomal subunit.

Its subcellular location is the plastid. The protein resides in the chloroplast. The sequence is that of Small ribosomal subunit protein bS18c from Aethionema grandiflorum (Persian stone-cress).